The following is a 133-amino-acid chain: MSKPKTPRSIAENEAQAIVSNLRVSPRKLNLVAQLIRNRKASDAVATLTFSKRRIAQAVKKALESAIANAENNHQLDVDRLVVSRAEVGRSIVMRRFHARGRGRAARVEKWFSHLKIVVAERSQETETKAEAA.

The protein belongs to the universal ribosomal protein uL22 family. As to quaternary structure, part of the 50S ribosomal subunit.

This protein binds specifically to 23S rRNA; its binding is stimulated by other ribosomal proteins, e.g. L4, L17, and L20. It is important during the early stages of 50S assembly. It makes multiple contacts with different domains of the 23S rRNA in the assembled 50S subunit and ribosome. In terms of biological role, the globular domain of the protein is located near the polypeptide exit tunnel on the outside of the subunit, while an extended beta-hairpin is found that lines the wall of the exit tunnel in the center of the 70S ribosome. In Granulibacter bethesdensis (strain ATCC BAA-1260 / CGDNIH1), this protein is Large ribosomal subunit protein uL22.